The following is a 649-amino-acid chain: Endoglucanase D (649 aa).

Positions 1–41 are cleaved as a signal peptide; that stretch reads MSRMTLKSSMKKRVLSLLIAVVFLSLTGVFPSGLIETKVSA. Asp-201 acts as the Nucleophile in catalysis. Catalysis depends on residues His-516 and Asp-546. The Proton donor role is filled by Glu-555. Residues 579 to 649 enclose the Dockerin domain; that stretch reads NEVLYGDVND…LIRVIEKLPI (71 aa).

Belongs to the glycosyl hydrolase 9 (cellulase E) family. Requires Ca(2+) as cofactor.

It carries out the reaction Endohydrolysis of (1-&gt;4)-beta-D-glucosidic linkages in cellulose, lichenin and cereal beta-D-glucans.. Its function is as follows. This enzyme catalyzes the endohydrolysis of 1,4-beta-glucosidic linkages in cellulose, lichenin and cereal beta-D-glucans. The polypeptide is Endoglucanase D (celD) (Acetivibrio thermocellus (strain ATCC 27405 / DSM 1237 / JCM 9322 / NBRC 103400 / NCIMB 10682 / NRRL B-4536 / VPI 7372) (Clostridium thermocellum)).